The chain runs to 326 residues: Phospho-N-acetylmuramoyl-pentapeptide-transferase (326 aa).

Helical transmembrane passes span 2–22, 51–71, 73–93, 113–133, 143–163, 175–195, 199–219, 225–245, 250–270, and 305–325; these read ILAT…FPYF, VPPM…LLWV, LTPE…LGFI, ILIQ…YSAE, GVII…IVGS, GLAA…AYIT, MNIT…LWFN, IFMG…TSVL, MLFA…IIQI, and VIVM…ITFL.

The protein belongs to the glycosyltransferase 4 family. MraY subfamily. Mg(2+) is required as a cofactor.

It is found in the cell membrane. It catalyses the reaction UDP-N-acetyl-alpha-D-muramoyl-L-alanyl-gamma-D-glutamyl-meso-2,6-diaminopimeloyl-D-alanyl-D-alanine + di-trans,octa-cis-undecaprenyl phosphate = di-trans,octa-cis-undecaprenyl diphospho-N-acetyl-alpha-D-muramoyl-L-alanyl-D-glutamyl-meso-2,6-diaminopimeloyl-D-alanyl-D-alanine + UMP. Its pathway is cell wall biogenesis; peptidoglycan biosynthesis. Functionally, catalyzes the initial step of the lipid cycle reactions in the biosynthesis of the cell wall peptidoglycan: transfers peptidoglycan precursor phospho-MurNAc-pentapeptide from UDP-MurNAc-pentapeptide onto the lipid carrier undecaprenyl phosphate, yielding undecaprenyl-pyrophosphoryl-MurNAc-pentapeptide, known as lipid I. The protein is Phospho-N-acetylmuramoyl-pentapeptide-transferase of Wolbachia sp. subsp. Drosophila simulans (strain wRi).